The sequence spans 377 residues: Nitric oxide reductase FlRd-NAD(+) reductase (377 aa).

The protein belongs to the FAD-dependent oxidoreductase family. FAD serves as cofactor.

The protein resides in the cytoplasm. The enzyme catalyses 2 reduced [nitric oxide reductase rubredoxin domain] + NAD(+) + H(+) = 2 oxidized [nitric oxide reductase rubredoxin domain] + NADH. It participates in nitrogen metabolism; nitric oxide reduction. In terms of biological role, one of at least two accessory proteins for anaerobic nitric oxide (NO) reductase. Reduces the rubredoxin moiety of NO reductase. In Escherichia coli (strain 55989 / EAEC), this protein is Nitric oxide reductase FlRd-NAD(+) reductase.